Here is a 33-residue protein sequence, read N- to C-terminus: DELTA-pseudomyrmecitoxin-Pp1a subunit B (33 aa).

Heterodimer composed of subunit A and subunit B (DELTA-PSDTX-Pp1a); disulfide-linked. In terms of tissue distribution, expressed by the venom gland.

The protein resides in the secreted. Functionally, this heterodimer has insecticidal and cytotoxic properties. Induces immediate paralysis when injected into blowflies (Lucilia cuprina), and then death within 24 hours. Also inhibits the growth of Aedes albopictus mosquito C6/36 cells. This chain is DELTA-pseudomyrmecitoxin-Pp1a subunit B, found in Pseudomyrmex penetrator (Ant).